A 346-amino-acid polypeptide reads, in one-letter code: Ribonucleoside-diphosphate reductase subunit beta (346 aa).

E89, E120, and H123 together coordinate Fe cation. Y129 is an active-site residue. Fe cation contacts are provided by E193, E227, and H230.

This sequence belongs to the ribonucleoside diphosphate reductase small chain family. Tetramer of two alpha and two beta subunits. It depends on Fe cation as a cofactor.

It catalyses the reaction a 2'-deoxyribonucleoside 5'-diphosphate + [thioredoxin]-disulfide + H2O = a ribonucleoside 5'-diphosphate + [thioredoxin]-dithiol. Functionally, provides the precursors necessary for DNA synthesis. Catalyzes the biosynthesis of deoxyribonucleotides from the corresponding ribonucleotides. This Chlamydia muridarum (strain MoPn / Nigg) protein is Ribonucleoside-diphosphate reductase subunit beta (nrdB).